We begin with the raw amino-acid sequence, 449 residues long: Phosphoglucosamine mutase (449 aa).

Residue Ser100 is the Phosphoserine intermediate of the active site. Residues Ser100, Asp241, Asp243, and Asp245 each contribute to the Mg(2+) site. At Ser100 the chain carries Phosphoserine.

The protein belongs to the phosphohexose mutase family. It depends on Mg(2+) as a cofactor. Post-translationally, activated by phosphorylation.

It carries out the reaction alpha-D-glucosamine 1-phosphate = D-glucosamine 6-phosphate. Catalyzes the conversion of glucosamine-6-phosphate to glucosamine-1-phosphate. This Clostridium botulinum (strain Langeland / NCTC 10281 / Type F) protein is Phosphoglucosamine mutase.